A 467-amino-acid polypeptide reads, in one-letter code: Hydroxyacid-oxoacid transhydrogenase, mitochondrial (467 aa).

K445 carries the N6-acetyllysine modification. S452 bears the Phosphoserine mark.

It belongs to the iron-containing alcohol dehydrogenase family. Hydroxyacid-oxoacid transhydrogenase subfamily.

It localises to the mitochondrion. The catalysed reaction is (S)-3-hydroxybutanoate + 2-oxoglutarate = (R)-2-hydroxyglutarate + acetoacetate. It catalyses the reaction 4-hydroxybutanoate + 2-oxoglutarate = (R)-2-hydroxyglutarate + succinate semialdehyde. Functionally, catalyzes the cofactor-independent reversible oxidation of gamma-hydroxybutyrate (GHB) to succinic semialdehyde (SSA) coupled to reduction of 2-ketoglutarate (2-KG) to D-2-hydroxyglutarate (D-2-HG). L-3-hydroxybutyrate (L-3-OHB) is also a substrate for HOT when using 2-KG as hydrogen acceptor, resulting in the formation of D-2-HG. The sequence is that of Hydroxyacid-oxoacid transhydrogenase, mitochondrial (ADHFE1) from Pongo abelii (Sumatran orangutan).